The sequence spans 804 residues: Ion-translocating oxidoreductase complex subunit C (804 aa).

4Fe-4S ferredoxin-type domains are found at residues 366–397 (SEMGQNEAEQGCIRCSACADACPAALLPQQLY) and 407–436 (KARAHNIADCIECGACAYVCPSNIPLVQYY). [4Fe-4S] cluster is bound by residues cysteine 377, cysteine 380, cysteine 383, cysteine 387, cysteine 416, cysteine 419, cysteine 422, and cysteine 426. Disordered regions lie at residues 466-532 (RLER…EVRV) and 567-804 (KAAQ…MQED). 7 stretches are compositionally biased toward low complexity: residues 484–495 (SVASSDAGAIAA), 567–582 (KAAQAAEASPTEAPQQ), 592–619 (AAVAAAVARTKAKKAAQAAEASPTEAPQ), 629–660 (KAAVAAAVARAKAKKAAQAAEASATEAPQQSA), 668–693 (AAVAAAVARAKAKKAAQAAEASATEA), 706–731 (AAVAAAVARAKAKKAAQAAEASATEA), and 744–769 (AAVAAAVARAKAKKAAQAAEASATEA).

This sequence belongs to the 4Fe4S bacterial-type ferredoxin family. RnfC subfamily. As to quaternary structure, the complex is composed of six subunits: RnfA, RnfB, RnfC, RnfD, RnfE and RnfG. [4Fe-4S] cluster serves as cofactor.

The protein resides in the cell inner membrane. Functionally, part of a membrane-bound complex that couples electron transfer with translocation of ions across the membrane. This chain is Ion-translocating oxidoreductase complex subunit C, found in Erwinia tasmaniensis (strain DSM 17950 / CFBP 7177 / CIP 109463 / NCPPB 4357 / Et1/99).